The sequence spans 449 residues: TNF receptor-associated factor family protein DDB_G0272340 (449 aa).

Residues 33–76 (CPICEECIMDVNKCEALQCKEGHVHCRLCWMKSLESKKECMTCR) form an RING-type; degenerate zinc finger. TRAF-type zinc fingers lie at residues 133-187 (GHIK…IDDS) and 189-251 (VHYS…SELS). Residues 263 to 309 (MEATIDQHICKFEKSEKEYKKLELEYNRLKDDFKILQSELKVIRELK) adopt a coiled-coil conformation. The MATH domain occupies 311 to 437 (NYQNKWVITN…QNSVTLNINI (127 aa)).

This sequence belongs to the TNF receptor-associated factor family. A subfamily.

The protein resides in the cytoplasm. In terms of biological role, probable adapter protein and signal transducer that links members of the tumor necrosis factor receptor family to different signaling pathways by association with the receptor cytoplasmic domain and kinases. The sequence is that of TNF receptor-associated factor family protein DDB_G0272340 from Dictyostelium discoideum (Social amoeba).